The following is a 338-amino-acid chain: Fructose-1,6-bisphosphatase class 1 1 (338 aa).

Positions 94, 116, 118, and 119 each coordinate Mg(2+). Residues 119–122 (DGSS), Asn210, and Lys276 contribute to the substrate site. Glu282 is a binding site for Mg(2+).

It belongs to the FBPase class 1 family. As to quaternary structure, homotetramer. It depends on Mg(2+) as a cofactor.

It localises to the cytoplasm. The enzyme catalyses beta-D-fructose 1,6-bisphosphate + H2O = beta-D-fructose 6-phosphate + phosphate. The protein operates within carbohydrate biosynthesis; gluconeogenesis. This is Fructose-1,6-bisphosphatase class 1 1 from Paraburkholderia phymatum (strain DSM 17167 / CIP 108236 / LMG 21445 / STM815) (Burkholderia phymatum).